A 238-amino-acid polypeptide reads, in one-letter code: Sugar fermentation stimulation protein homolog (238 aa).

It belongs to the SfsA family.

This Vibrio vulnificus (strain YJ016) protein is Sugar fermentation stimulation protein homolog.